Consider the following 121-residue polypeptide: Large ribosomal subunit protein bL20 (121 aa).

It belongs to the bacterial ribosomal protein bL20 family.

In terms of biological role, binds directly to 23S ribosomal RNA and is necessary for the in vitro assembly process of the 50S ribosomal subunit. It is not involved in the protein synthesizing functions of that subunit. This Sphingopyxis alaskensis (strain DSM 13593 / LMG 18877 / RB2256) (Sphingomonas alaskensis) protein is Large ribosomal subunit protein bL20.